Here is a 117-residue protein sequence, read N- to C-terminus: Large ribosomal subunit protein bL20c (117 aa).

This sequence belongs to the bacterial ribosomal protein bL20 family.

Its subcellular location is the plastid. It localises to the chloroplast. Functionally, binds directly to 23S ribosomal RNA and is necessary for the in vitro assembly process of the 50S ribosomal subunit. It is not involved in the protein synthesizing functions of that subunit. The chain is Large ribosomal subunit protein bL20c from Eucalyptus globulus subsp. globulus (Tasmanian blue gum).